The sequence spans 369 residues: Fructose-bisphosphate aldolase (369 aa).

Aspartate 40 is a binding site for dihydroxyacetone phosphate. D-glyceraldehyde 3-phosphate contacts are provided by serine 42 and threonine 45. A beta-D-fructose 1,6-bisphosphate-binding site is contributed by arginine 49. D-glyceraldehyde 3-phosphate is bound at residue lysine 113. Lysine 152 is a dihydroxyacetone phosphate binding site. Glutamate 195 is a binding site for D-glyceraldehyde 3-phosphate. The active-site Proton acceptor is the glutamate 195. Dihydroxyacetone phosphate-binding residues include lysine 237, serine 279, and glycine 280. Lysine 237 (schiff-base intermediate with dihydroxyacetone phosphate) is an active-site residue. Beta-D-fructose 1,6-bisphosphate-binding positions include 279-281 (SGG) and serine 307. Positions 309 and 310 each coordinate dihydroxyacetone phosphate. Arginine 310 serves as a coordination point for beta-D-fructose 1,6-bisphosphate.

It belongs to the class I fructose-bisphosphate aldolase family. Homotetramer. Interacts with TRAP (via cytoplasmic domain); the interaction prevents substrate binding and thereby inhibits aldolase activity. Interacts with MTRAP (via cytoplasmic domain); MTRAP phosphorylation may increase the binding to FBPA. Interact with RH1 (via cytoplasmic domain). Interacts with RH2b (via cytoplasmic domain). Interacts with RH4 (via cytoplasmic domain). Interacts with AMA1 (via cytoplasmic domain); the interaction is weak, however it may be increased upon AMA1 phosphorylation. Interacts with EBA140 (via cytoplasmic domain); the interaction is weak. Interacts with EBA175 (via cytoplasmic domain); the interaction is weak. Interacts with EBA181 (via cytoplasmic domain); the interaction is weak. Interacts with G-actin and F-actin. May interact with ACT2/actin II; the interaction inhibits FBPA catalytic activity. Interacts with human SLC4A1/band 3 (via N-terminus); the interaction inhibits FBPA catalytic activity.

The protein resides in the cytoplasm. Its subcellular location is the membrane. It localises to the host cell membrane. The enzyme catalyses beta-D-fructose 1,6-bisphosphate = D-glyceraldehyde 3-phosphate + dihydroxyacetone phosphate. It functions in the pathway carbohydrate degradation; glycolysis; D-glyceraldehyde 3-phosphate and glycerone phosphate from D-glucose: step 4/4. With respect to regulation, the cytoplasmic tail of TRAP and probably other adhesins acts as a competitive inhibitor as the binding sites of the glycolytic substrate fructose 1,6-bisphosphate and TRAP partially overlap. Plays a key role in glycolysis by catalyzing the cleavage of fructose 1,6-bisphosphate into dihydroxyacetone phosphate and glyceraldehyde 3-phosphate. Independently of its catalytic activity, connects the actin filaments, and thus the actomyosin motor, to cell surface adhesins of the thrombospondin-related anonymous protein (TRAP), the erythrocyte binding ligand (EBL) and reticulocyte binding homolog (RH) protein families; this interaction is probably involved in transducing the motor force across the parasite surface required for sporozoite and ookinete gliding motility and merozoite invasion. Stimulates actin polymerisation. In Plasmodium falciparum (isolate 3D7), this protein is Fructose-bisphosphate aldolase.